Here is a 759-residue protein sequence, read N- to C-terminus: TSK-associating protein 1 (759 aa).

An N-terminal signal peptide occupies residues Met1–Cys29. Residues Gly55 to Thr74 form a disordered region. Residues Ala63–Thr74 show a composition bias toward polar residues. 10 EFE repeat repeats span residues Val91 to Leu138, Ser139 to His176, Ser177 to His215, Ser216 to Gln254, Ser255 to His293, Ala294 to His329, Phe330 to Gln368, Ser369 to Gln407, Ser408 to Glu443, and Ser444 to Glu473. Positions Val91 to Glu473 are 10 X approximate EFE repeat. Coiled coils occupy residues Arg142 to Ala461 and Ile685 to Glu734. Disordered stretches follow at residues Glu154–Leu184, Gln200–Arg219, Ala271–Ala332, and Leu393–Met414.

As to quaternary structure, homomultimer. Interacts (via C-terminal domain) with GIP1, CSN1 (via N-terminal domain) and TSK (via TPR repeats). Binds calcium through the EFE repeats. As to expression, expressed preferentially in flowers and shoot apex.

The protein resides in the endoplasmic reticulum lumen. It is found in the nucleus envelope. Its subcellular location is the cytoplasm. In terms of biological role, involved in seedling development in the dark. May be involved, when interacting with TSK, in the organization of spindle microtubules and may participate, when interacting with GIP1, in structural links between the nuclear envelope and the cytoskeleton. The chain is TSK-associating protein 1 (TSA1) from Arabidopsis thaliana (Mouse-ear cress).